The primary structure comprises 491 residues: Probable Xaa-Pro aminopeptidase AFLA_084750 (491 aa).

Mn(2+) is bound by residues Asp271, Asp282, Glu419, and Glu458.

The protein belongs to the peptidase M24B family. It depends on Mn(2+) as a cofactor.

It carries out the reaction Release of any N-terminal amino acid, including proline, that is linked to proline, even from a dipeptide or tripeptide.. Its function is as follows. Catalyzes the removal of a penultimate prolyl residue from the N-termini of peptides. This is Probable Xaa-Pro aminopeptidase AFLA_084750 from Aspergillus flavus (strain ATCC 200026 / FGSC A1120 / IAM 13836 / NRRL 3357 / JCM 12722 / SRRC 167).